Consider the following 307-residue polypeptide: Small ribosomal subunit biogenesis GTPase RsgA (307 aa).

A CP-type G domain is found at 78–240 (HKTAFGHLIA…VIDTPGIKEL (163 aa)). GTP-binding positions include 128–131 (NKSD) and 182–190 (GHSGVGKST). 4 residues coordinate Zn(2+): cysteine 264, cysteine 269, histidine 271, and cysteine 277.

It belongs to the TRAFAC class YlqF/YawG GTPase family. RsgA subfamily. As to quaternary structure, monomer. Associates with 30S ribosomal subunit, binds 16S rRNA. Requires Zn(2+) as cofactor.

The protein resides in the cytoplasm. In terms of biological role, one of several proteins that assist in the late maturation steps of the functional core of the 30S ribosomal subunit. Helps release RbfA from mature subunits. May play a role in the assembly of ribosomal proteins into the subunit. Circularly permuted GTPase that catalyzes slow GTP hydrolysis, GTPase activity is stimulated by the 30S ribosomal subunit. This chain is Small ribosomal subunit biogenesis GTPase RsgA, found in Cytophaga hutchinsonii (strain ATCC 33406 / DSM 1761 / CIP 103989 / NBRC 15051 / NCIMB 9469 / D465).